Consider the following 159-residue polypeptide: Probable cyclic pyranopterin monophosphate synthase (159 aa).

Residues 75–77 and 111–112 each bind substrate; these read LCH and ME. Residue Asp126 is part of the active site.

It belongs to the MoaC family. In terms of assembly, homohexamer; trimer of dimers.

The catalysed reaction is (8S)-3',8-cyclo-7,8-dihydroguanosine 5'-triphosphate = cyclic pyranopterin phosphate + diphosphate. It functions in the pathway cofactor biosynthesis; molybdopterin biosynthesis. In terms of biological role, catalyzes the conversion of (8S)-3',8-cyclo-7,8-dihydroguanosine 5'-triphosphate to cyclic pyranopterin monophosphate (cPMP). The polypeptide is Probable cyclic pyranopterin monophosphate synthase (Pyrococcus abyssi (strain GE5 / Orsay)).